Consider the following 255-residue polypeptide: 3-deoxy-manno-octulosonate cytidylyltransferase (255 aa).

The protein belongs to the KdsB family.

Its subcellular location is the cytoplasm. The catalysed reaction is 3-deoxy-alpha-D-manno-oct-2-ulosonate + CTP = CMP-3-deoxy-beta-D-manno-octulosonate + diphosphate. The protein operates within nucleotide-sugar biosynthesis; CMP-3-deoxy-D-manno-octulosonate biosynthesis; CMP-3-deoxy-D-manno-octulosonate from 3-deoxy-D-manno-octulosonate and CTP: step 1/1. It participates in bacterial outer membrane biogenesis; lipopolysaccharide biosynthesis. Its function is as follows. Activates KDO (a required 8-carbon sugar) for incorporation into bacterial lipopolysaccharide in Gram-negative bacteria. The polypeptide is 3-deoxy-manno-octulosonate cytidylyltransferase (Hahella chejuensis (strain KCTC 2396)).